A 930-amino-acid polypeptide reads, in one-letter code: Kinesin-like protein KIN-7J (930 aa).

Residues Lys9 to Arg273 form the Kinesin motor domain. Gly95–Thr102 is a binding site for ATP. Disordered regions lie at residues Leu449–Asp569 and Met655–Asp686. Residues Ser459–Ser468 are compositionally biased toward low complexity. Composition is skewed to basic and acidic residues over residues Glu473–Met482 and Ala533–Asn558. Low complexity predominate over residues Thr666–Thr681. Residue Lys805 forms a Glycyl lysine isopeptide (Lys-Gly) (interchain with G-Cter in ubiquitin) linkage.

This sequence belongs to the TRAFAC class myosin-kinesin ATPase superfamily. Kinesin family. KIN-7 subfamily.

This is Kinesin-like protein KIN-7J from Arabidopsis thaliana (Mouse-ear cress).